Here is a 277-residue protein sequence, read N- to C-terminus: Large ribosomal subunit protein uL2c (277 aa).

The disordered stretch occupies residues 223 to 277 (VVMNPIDHPHGGGEGRAPIGRKKPLTPWGHPALGKRSRKNNKYSDTLILRRRKNS).

This sequence belongs to the universal ribosomal protein uL2 family. As to quaternary structure, part of the 50S ribosomal subunit.

It is found in the plastid. Its subcellular location is the chloroplast. This is Large ribosomal subunit protein uL2c (rpl2) from Marchantia polymorpha (Common liverwort).